We begin with the raw amino-acid sequence, 598 residues long: Ecto-NOX disulfide-thiol exchanger 2 (598 aa).

The 80-residue stretch at 99–178 (KTVFVGGLPE…GRLHVDFAQA (80 aa)) folds into the RRM domain. Coiled coils occupy residues 264-299 (IQSANSHVRRLVNEKATHEKEMEEAKEKFKQALSGI) and 352-476 (RREE…KQEN).

It belongs to the ENOX family. Requires Cu cation as cofactor. Post-translationally, glycosylated.

The protein localises to the cell membrane. The protein resides in the secreted. It is found in the extracellular space. Its activity is regulated as follows. Inhibited by the antitumor sulfonylurea LY181984, the vabilloid capsaicin, and retinoids. Functionally, may be involved in cell growth. Probably acts as a terminal oxidase of plasma electron transport from cytosolic NAD(P)H via hydroquinones to acceptors at the cell surface. Hydroquinone oxidase activity alternates with a protein disulfide-thiol interchange/oxidoreductase activity which may control physical membrane displacements associated with vesicle budding or cell enlargement. The activities oscillate with a period length of 22 minutes and play a role in control of the ultradian cellular biological clock. The protein is Ecto-NOX disulfide-thiol exchanger 2 (Enox2) of Mus musculus (Mouse).